We begin with the raw amino-acid sequence, 326 residues long: Protein phosphatase 1 regulatory subunit SDS22 homolog (326 aa).

The disordered stretch occupies residues 1–22 (MSNDKSAEVVVLPRENDEESKE). LRR repeat units follow at residues 35–57 (DIDS…LTGF), 58–80 (PKIE…ISSL), 81–102 (VTLT…LESL), 103–126 (VNLV…KLTK), 128–146 (ETLY…LEAL), 147–170 (TQLK…HLVN), 172–190 (DELF…VETL), 191–212 (QKLS…VEQL), 213–236 (NNLK…PLTN), 238–256 (LLLD…VERL), 257–280 (ESLN…QLSK), and 281–304 (LKGL…QYRR).

The protein belongs to the SDS22 family.

It is found in the nucleus. Regulatory subunit of protein phosphatase 1. In Caenorhabditis elegans, this protein is Protein phosphatase 1 regulatory subunit SDS22 homolog (sds-22).